The chain runs to 510 residues: Pantetheinase (510 aa).

An N-terminal signal peptide occupies residues M1–S22. The 277-residue stretch at Y31–S307 folds into the CN hydrolase domain. A glycan (N-linked (GlcNAc...) asparagine) is linked at N39. Residue E80 is the Proton acceptor of the active site. N-linked (GlcNAc...) asparagine glycans are attached at residues N87 and N147. K179 (proton donor) is an active-site residue. N201 carries an N-linked (GlcNAc...) asparagine glycan. The active-site Nucleophile is the C212. N316 and N354 each carry an N-linked (GlcNAc...) asparagine glycan. D492 carries the GPI-anchor amidated aspartate lipid modification. The propeptide at L493 to K510 is removed in mature form. The O-linked (GalNAc...) threonine glycan is linked to T504.

This sequence belongs to the carbon-nitrogen hydrolase superfamily. BTD/VNN family. As to quaternary structure, monomer.

Its subcellular location is the cell membrane. It catalyses the reaction (R)-pantetheine + H2O = cysteamine + (R)-pantothenate. In terms of biological role, amidohydrolase that hydrolyzes specifically one of the carboamide linkages in D-pantetheine thus recycling pantothenic acid (vitamin B5) and releasing cysteamine. This is Pantetheinase (VNN1) from Bos taurus (Bovine).